Reading from the N-terminus, the 522-residue chain is Lysine--tRNA ligase (522 aa).

The 'HIGH' region motif lies at 44-52 (PSGLPHIGT). The 'KMSKS' region motif lies at 290-294 (KISKS). Residue lysine 293 coordinates ATP.

The protein belongs to the class-I aminoacyl-tRNA synthetase family.

The protein localises to the cytoplasm. It carries out the reaction tRNA(Lys) + L-lysine + ATP = L-lysyl-tRNA(Lys) + AMP + diphosphate. The sequence is that of Lysine--tRNA ligase from Rickettsia bellii (strain OSU 85-389).